The primary structure comprises 129 residues: Protein Turandot B2 (129 aa).

An N-terminal signal peptide occupies residues 1–21; the sequence is MNSATSLMCFALLLISPLCMG.

It belongs to the Turandot family.

The protein resides in the secreted. In terms of biological role, a humoral factor that may play a role in stress tolerance. This is Protein Turandot B2 (TotB2) from Drosophila erecta (Fruit fly).